Reading from the N-terminus, the 666-residue chain is Probable potassium transport system protein Kup (666 aa).

A run of 12 helical transmembrane segments spans residues 16–36, 58–78, 99–119, 141–161, 167–187, 221–241, 253–273, 292–312, 343–363, 373–393, 402–422, and 424–444; these read GFIIALGIVYGDIGTSPLYTM, ISLIIWTLTLITTIKYVLVAL, TPWLIVPAVIGGATLLSDGAL, IFQNQSNVIFATLFILLLLFA, TGVIGKLFGPIMFIWFAFLGI, IFILGSIFLATTGAEALYSDL, WPFVKVAIILSYCGQGAWILA, FTMHVVILATLAAIIASQALI, TYIPVINWFLFAITTSIVLLF, YGLAITITMLMTTILLSFFLI, VLLMMIFFGILEGIFFLASAV, and FMHGGYVVVIIAVAIIFIMTI.

The protein belongs to the HAK/KUP transporter (TC 2.A.72) family.

The protein resides in the cell membrane. The enzyme catalyses K(+)(in) + H(+)(in) = K(+)(out) + H(+)(out). In terms of biological role, transport of potassium into the cell. Likely operates as a K(+):H(+) symporter. The polypeptide is Probable potassium transport system protein Kup (Streptococcus agalactiae serotype V (strain ATCC BAA-611 / 2603 V/R)).